The following is a 445-amino-acid chain: Exodeoxyribonuclease 7 large subunit (445 aa).

It belongs to the XseA family. As to quaternary structure, heterooligomer composed of large and small subunits.

The protein localises to the cytoplasm. The catalysed reaction is Exonucleolytic cleavage in either 5'- to 3'- or 3'- to 5'-direction to yield nucleoside 5'-phosphates.. Its function is as follows. Bidirectionally degrades single-stranded DNA into large acid-insoluble oligonucleotides, which are then degraded further into small acid-soluble oligonucleotides. The sequence is that of Exodeoxyribonuclease 7 large subunit from Staphylococcus aureus (strain bovine RF122 / ET3-1).